We begin with the raw amino-acid sequence, 650 residues long: Epithelial sodium channel subunit beta (650 aa).

Topologically, residues 1–95 (MLLHINPAYL…IICEGPKKKA (95 aa)) are cytoplasmic. The helical transmembrane segment at 96–116 (MWFLLTLLFTALVCWQWGIFI) threads the bilayer. The Extracellular portion of the chain corresponds to 117–542 (RTYLSWEVSV…GGQFGFWMGG (426 aa)). Disulfide bonds link C143–C317, C229–C234, C241–C248, C294–C301, and C406–C458. N244 is a glycosylation site (N-linked (GlcNAc...) asparagine). N305 carries an N-linked (GlcNAc...) asparagine glycan. A helical membrane pass occupies residues 543-563 (SVLCLIEFGEIIIDFVWITII). Residues 564–650 (KLVALAKSLR…IESDSEGDAI (87 aa)) are Cytoplasmic-facing. Positions 600–650 (FQPDTAPRSPNTGPYPNEQALPIPGTPPPNYDSLRLQPLDVIESDSEGDAI) are disordered. The PY motif; recruits WW domain-containing proteins and is thereby required for ubiquitination and inhibition of the channel by NEDD4 and NEDD4L signature appears at 626-630 (PPPNY). Residues 641–650 (IESDSEGDAI) show a composition bias toward acidic residues. S643 and S645 each carry phosphoserine.

This sequence belongs to the amiloride-sensitive sodium channel (TC 1.A.6) family. SCNN1B subfamily. As to quaternary structure, component of the heterotrimeric epithelial sodium channel (ENaC) composed of an alpha/SCNN1A, a beta/SCNN1B and a gamma/SCNN1G subunit. An additional delta/SCNN1D subunit can replace the alpha/SCNN1A subunit to form an alternative channel with specific properties. Interacts with WWP1 (via WW domains). Interacts with WWP2 (via WW domains); inhibits the channel. Interacts with the full-length immature form of PCSK9 (pro-PCSK9). Interacts (N-glycosylated) with BPIFA1; the interaction is direct and inhibits the proteolytic processing of SCNN1A and SCNN1G and the activation of ENaC. Ubiquitinated. Can be ubiquitinated at multiple sites and undergo monoubiquitination and polyubiquitination. Ubiquitination by NEDD4 or NEDD4L inhibits the ENaC channel through endocytosis, intracellular retention and degradation of its individual subunits. However, some studies could not confirm the ubiquitination of this subunit of the ENaC. Post-translationally, phosphorylated on serine and threonine residues. Aldosterone and insulin increase the basal level of phosphorylation. In terms of processing, N-glycosylated. N-glycosylation is required for interaction with BPIFA1.

It is found in the apical cell membrane. Its subcellular location is the cytoplasmic vesicle membrane. It carries out the reaction Na(+)(in) = Na(+)(out). Originally identified and characterized by its inhibition by the diuretic drug amiloride. This is one of the three pore-forming subunits of the heterotrimeric epithelial sodium channel (ENaC), a critical regulator of sodium balance and fluid homeostasis. ENaC operates in epithelial tissues, where it mediates the electrodiffusion of sodium ions from extracellular fluid through the apical membrane of cells, with water following osmotically. It plays a key role in maintaining sodium homeostasis through electrogenic sodium reabsorption in the kidneys. Additionally, ENaC is essential for airway surface liquid homeostasis, which is crucial for proper mucus clearance. The chain is Epithelial sodium channel subunit beta from Pan troglodytes (Chimpanzee).